The primary structure comprises 507 residues: Putative thymidine phosphorylase (507 aa).

Belongs to the thymidine/pyrimidine-nucleoside phosphorylase family. Type 2 subfamily.

The enzyme catalyses thymidine + phosphate = 2-deoxy-alpha-D-ribose 1-phosphate + thymine. The chain is Putative thymidine phosphorylase from Ralstonia nicotianae (strain ATCC BAA-1114 / GMI1000) (Ralstonia solanacearum).